The sequence spans 195 residues: Probable molybdenum cofactor guanylyltransferase (195 aa).

Residues 8 to 10, Lys20, Asp65, and Asp96 contribute to the GTP site; that span reads LSG. Asp96 contributes to the Mg(2+) binding site.

Belongs to the MobA family. The cofactor is Mg(2+).

The protein localises to the cytoplasm. The catalysed reaction is Mo-molybdopterin + GTP + H(+) = Mo-molybdopterin guanine dinucleotide + diphosphate. Its function is as follows. Transfers a GMP moiety from GTP to Mo-molybdopterin (Mo-MPT) cofactor (Moco or molybdenum cofactor) to form Mo-molybdopterin guanine dinucleotide (Mo-MGD) cofactor. This is Probable molybdenum cofactor guanylyltransferase from Bacillus licheniformis (strain ATCC 14580 / DSM 13 / JCM 2505 / CCUG 7422 / NBRC 12200 / NCIMB 9375 / NCTC 10341 / NRRL NRS-1264 / Gibson 46).